The sequence spans 773 residues: Carnitine O-palmitoyltransferase 1, liver isoform (773 aa).

Alanine 2 carries the N-acetylalanine modification. Residues 2 to 47 (AEAHQAVAFQFTVTPDGIDLRLSHEALRQIYLSGLHSWKKKFIRFK) lie on the Cytoplasmic side of the membrane. Residues 48–73 (NGIITGVYPASPSSWLIVVVGVMTTM) traverse the membrane as a helical segment. The Mitochondrial intermembrane segment spans residues 74 to 102 (YAKIDPSLGIIAKINRTLETANCMSSQTK). The helical transmembrane segment at 103-122 (NVVSGVLFGTGLWVALIVTM) threads the bilayer. The Cytoplasmic portion of the chain corresponds to 123-773 (RYSLKVLLSY…LFGLSSNSKK (651 aa)). At tyrosine 282 the chain carries 3'-nitrotyrosine. Residue histidine 473 is the Proton acceptor of the active site. 555–567 (GKGIIKKCRTSPD) is a CoA binding site. Threonine 588 carries the post-translational modification Phosphothreonine. Tyrosine 589 carries the 3'-nitrotyrosine modification. Positions 589 and 602 each coordinate (R)-carnitine. The residue at position 604 (threonine 604) is a Phosphothreonine. Residues serine 741 and serine 747 each carry the phosphoserine modification.

The protein belongs to the carnitine/choline acetyltransferase family. Homohexamer and homotrimer. Identified in a complex that contains at least CPT1A, ACSL1 and VDAC1. Also identified in complexes with ACSL1 and VDAC2 and VDAC3. Interacts with ZDHHC4. Strong expression in kidney and heart, and lower in liver and skeletal muscle.

It is found in the mitochondrion outer membrane. It carries out the reaction (R)-carnitine + hexadecanoyl-CoA = O-hexadecanoyl-(R)-carnitine + CoA. The enzyme catalyses succinyl-CoA + L-lysyl-[protein] = N(6)-succinyl-L-lysyl-[protein] + CoA + H(+). It participates in lipid metabolism; fatty acid beta-oxidation. Inhibited by malonyl-CoA. Catalyzes the transfer of the acyl group of long-chain fatty acid-CoA conjugates onto carnitine, an essential step for the mitochondrial uptake of long-chain fatty acids and their subsequent beta-oxidation in the mitochondrion. Also possesses a lysine succinyltransferase activity that can regulate enzymatic activity of substrate proteins such as ENO1 and metabolism independent of its classical carnitine O-palmitoyltransferase activity. Plays an important role in hepatic triglyceride metabolism. Also plays a role in inducible regulatory T-cell (iTreg) differentiation once activated by butyryl-CoA that antagonizes malonyl-CoA-mediated CPT1A repression. Sustains the IFN-I response by recruiting ZDHCC4 to palmitoylate MAVS at the mitochondria leading to MAVS stabilization and activation. Promotes ROS-induced oxidative stress in liver injury via modulation of NFE2L2 and NLRP3-mediated signaling pathways. This chain is Carnitine O-palmitoyltransferase 1, liver isoform, found in Homo sapiens (Human).